A 51-amino-acid polypeptide reads, in one-letter code: MVAYWRQAGLSYIRYSQICAKAVRDALKTEFKANAEKTSGSNVKIVKVKKE.

An N6-acetyllysine; alternate mark is found at Lys-21, Lys-32, and Lys-37. An N6-succinyllysine; alternate mark is found at Lys-21, Lys-32, and Lys-37. Lys-44 carries the post-translational modification N6-acetyllysine.

Belongs to the eukaryotic ATPase epsilon family. Component of the ATP synthase complex composed at least of ATP5F1A/subunit alpha, ATP5F1B/subunit beta, ATP5MC1/subunit c (homooctomer), MT-ATP6/subunit a, MT-ATP8/subunit 8, ATP5ME/subunit e, ATP5MF/subunit f, ATP5MG/subunit g, ATP5MK/subunit k, ATP5MJ/subunit j, ATP5F1C/subunit gamma, ATP5F1D/subunit delta, ATP5F1E/subunit epsilon, ATP5PF/subunit F6, ATP5PB/subunit b, ATP5PD/subunit d, ATP5PO/subunit OSCP. ATP synthase complex consists of a soluble F(1) head domain (subunits alpha(3) and beta(3)) - the catalytic core - and a membrane F(0) domain - the membrane proton channel (subunits c, a, 8, e, f, g, k and j). These two domains are linked by a central stalk (subunits gamma, delta, and epsilon) rotating inside the F1 region and a stationary peripheral stalk (subunits F6, b, d, and OSCP). In terms of tissue distribution, ubiquitous.

It is found in the mitochondrion. It localises to the mitochondrion inner membrane. Its function is as follows. Subunit epsilon, of the mitochondrial membrane ATP synthase complex (F(1)F(0) ATP synthase or Complex V) that produces ATP from ADP in the presence of a proton gradient across the membrane which is generated by electron transport complexes of the respiratory chain. ATP synthase complex consist of a soluble F(1) head domain - the catalytic core - and a membrane F(1) domain - the membrane proton channel. These two domains are linked by a central stalk rotating inside the F(1) region and a stationary peripheral stalk. During catalysis, ATP synthesis in the catalytic domain of F(1) is coupled via a rotary mechanism of the central stalk subunits to proton translocation. In vivo, can only synthesize ATP although its ATP hydrolase activity can be activated artificially in vitro. May be essential for the assembly of F(1) and may play an important role in the incorporation of the hydrophobic subunit c into the F(1)-c oligomer rotor of the mitochondrial ATP synthase complex. The sequence is that of ATP synthase F(1) complex subunit epsilon, mitochondrial from Homo sapiens (Human).